The following is a 322-amino-acid chain: Protein-L-isoaspartate O-methyltransferase (322 aa).

The tract at residues 1-101 (MSGERAKRFP…AKQGDRSAAP (101 aa)) is disordered. A compositionally biased stretch (basic and acidic residues) spans 14 to 29 (EDLKREPRKPEGRVAE). Composition is skewed to low complexity over residues 33 to 51 (AGDA…PAAA) and 76 to 91 (HAPA…PQGG). Residue S170 is part of the active site.

It belongs to the methyltransferase superfamily. L-isoaspartyl/D-aspartyl protein methyltransferase family.

The protein localises to the cytoplasm. It carries out the reaction [protein]-L-isoaspartate + S-adenosyl-L-methionine = [protein]-L-isoaspartate alpha-methyl ester + S-adenosyl-L-homocysteine. Its function is as follows. Catalyzes the methyl esterification of L-isoaspartyl residues in peptides and proteins that result from spontaneous decomposition of normal L-aspartyl and L-asparaginyl residues. It plays a role in the repair and/or degradation of damaged proteins. This is Protein-L-isoaspartate O-methyltransferase from Burkholderia pseudomallei (strain 1710b).